We begin with the raw amino-acid sequence, 468 residues long: 6-phosphogluconate dehydrogenase, decarboxylating (468 aa).

NADP(+) is bound by residues 10 to 15 (GMAVMG), 33 to 35 (NRS), 74 to 76 (VKA), and asparagine 102. Substrate contacts are provided by residues asparagine 102 and 128–130 (SGG). Lysine 183 serves as the catalytic Proton acceptor. Residue 186-187 (HN) coordinates substrate. Glutamate 190 (proton donor) is an active-site residue. 5 residues coordinate substrate: tyrosine 191, lysine 260, arginine 287, arginine 445, and histidine 451.

This sequence belongs to the 6-phosphogluconate dehydrogenase family. In terms of assembly, homodimer.

The catalysed reaction is 6-phospho-D-gluconate + NADP(+) = D-ribulose 5-phosphate + CO2 + NADPH. It functions in the pathway carbohydrate degradation; pentose phosphate pathway; D-ribulose 5-phosphate from D-glucose 6-phosphate (oxidative stage): step 3/3. Catalyzes the oxidative decarboxylation of 6-phosphogluconate to ribulose 5-phosphate and CO(2), with concomitant reduction of NADP to NADPH. This is 6-phosphogluconate dehydrogenase, decarboxylating (gnd) from Escherichia coli.